The primary structure comprises 555 residues: Hdr-like menaquinol oxidoreductase iron-sulfur subunit 2 (555 aa).

2 4Fe-4S ferredoxin-type domains span residues 82-111 (RSFKLFMDICVRCGACADKCHYYIGTGDPK) and 151-180 (KELYYYAYQCSLCRRCSLFCPYGIDTAEIV). The [4Fe-4S] cluster site is built by C91, C94, C97, C101, C160, C163, C166, and C170.

Consists of five subunits: an integral membrane subunit, a cytochrome b-like subunit, a cytochrome c subunit and two iron-sulfur subunits. [4Fe-4S] cluster serves as cofactor.

Its subcellular location is the cell membrane. In terms of biological role, has menaquinol-oxidizing activity. HmeC and HmeD subunits may together mediate electron transfer from menaquinol to an unidentified electron acceptor on the cytoplasmic side of the membrane. This Archaeoglobus fulgidus (strain ATCC 49558 / DSM 4304 / JCM 9628 / NBRC 100126 / VC-16) protein is Hdr-like menaquinol oxidoreductase iron-sulfur subunit 2 (hmeD).